Consider the following 66-residue polypeptide: Conotoxin TsMEKL-03 (66 aa).

The signal sequence occupies residues 1 to 9 (VILLMSTQA). The propeptide occupies 10–38 (LIQSGVEKRSNKIKALSKRKTTAESWWEG). Intrachain disulfides connect Cys-40–Cys-54, Cys-47–Cys-58, and Cys-53–Cys-63.

It belongs to the conotoxin O2 superfamily. Expressed by the venom duct.

The protein localises to the secreted. This Conus tessulatus (Tessellate cone) protein is Conotoxin TsMEKL-03.